A 93-amino-acid chain; its full sequence is U12-lycotoxin-Ls1e (93 aa).

A signal peptide spans 1 to 18 (MKFAVILLFTLVVLAVAS). Residues 19-38 (ESVEEDTREIDVEEFQEQQR) constitute a propeptide that is removed on maturation.

The protein belongs to the neurotoxin 31 family. Contains 5 disulfide bonds. Expressed by the venom gland.

The protein localises to the secreted. This Lycosa singoriensis (Wolf spider) protein is U12-lycotoxin-Ls1e.